The chain runs to 213 residues: uncharacterized protein (213 aa).

3 residues coordinate S-adenosyl-L-methionine: Gly53, Glu74, and Asp96.

The protein belongs to the methyltransferase superfamily. YrrT family.

Its function is as follows. Could be a S-adenosyl-L-methionine-dependent methyltransferase. This is an uncharacterized protein from Oceanobacillus iheyensis (strain DSM 14371 / CIP 107618 / JCM 11309 / KCTC 3954 / HTE831).